A 911-amino-acid chain; its full sequence is DNA mismatch repair protein MutS (911 aa).

Basic and acidic residues predominate over residues 1–10 (MDNKTDHKND). The interval 1 to 24 (MDNKTDHKNDLNSQPVPSSAPHKE) is disordered. 662 to 669 (GPNMGGKS) serves as a coordination point for ATP.

Belongs to the DNA mismatch repair MutS family.

Functionally, this protein is involved in the repair of mismatches in DNA. It is possible that it carries out the mismatch recognition step. This protein has a weak ATPase activity. The polypeptide is DNA mismatch repair protein MutS (Bartonella quintana (strain Toulouse) (Rochalimaea quintana)).